Consider the following 167-residue polypeptide: 2-C-methyl-D-erythritol 2,4-cyclodiphosphate synthase (167 aa).

Residues aspartate 11 and histidine 13 each coordinate a divalent metal cation. 4-CDP-2-C-methyl-D-erythritol 2-phosphate contacts are provided by residues 11 to 13 (DIH) and 37 to 38 (HS). Residue histidine 45 participates in a divalent metal cation binding. 4-CDP-2-C-methyl-D-erythritol 2-phosphate is bound by residues 59-61 (DIG), 64-68 (FSDTD), 103-109 (AQAPKMA), and arginine 145.

This sequence belongs to the IspF family. Homotrimer. A divalent metal cation serves as cofactor.

The catalysed reaction is 4-CDP-2-C-methyl-D-erythritol 2-phosphate = 2-C-methyl-D-erythritol 2,4-cyclic diphosphate + CMP. The protein operates within isoprenoid biosynthesis; isopentenyl diphosphate biosynthesis via DXP pathway; isopentenyl diphosphate from 1-deoxy-D-xylulose 5-phosphate: step 4/6. Functionally, involved in the biosynthesis of isopentenyl diphosphate (IPP) and dimethylallyl diphosphate (DMAPP), two major building blocks of isoprenoid compounds. Catalyzes the conversion of 4-diphosphocytidyl-2-C-methyl-D-erythritol 2-phosphate (CDP-ME2P) to 2-C-methyl-D-erythritol 2,4-cyclodiphosphate (ME-CPP) with a corresponding release of cytidine 5-monophosphate (CMP). The polypeptide is 2-C-methyl-D-erythritol 2,4-cyclodiphosphate synthase (Nitrosomonas eutropha (strain DSM 101675 / C91 / Nm57)).